A 674-amino-acid polypeptide reads, in one-letter code: Forkhead box protein P1 (674 aa).

Residues 1–19 (MMQESGTETKSNGSAIQNG) are compositionally biased toward polar residues. The interval 1–44 (MMQESGTETKSNGSAIQNGSSGGNHLLECGSLREGRSNGETPAV) is disordered. Phosphoserine is present on Ser-82. A compositionally biased stretch (polar residues) spans 269 to 281 (MNPHASTNGQLSV). The disordered stretch occupies residues 269 to 296 (MNPHASTNGQLSVHTPKRESLSHEEHPH). Positions 284–296 (PKRESLSHEEHPH) are enriched in basic and acidic residues. Lys-285 is covalently cross-linked (Glycyl lysine isopeptide (Lys-Gly) (interchain with G-Cter in SUMO2)). The C2H2-type zinc-finger motif lies at 304 to 329 (GVCKWPGCEAVCEDFQSFLKHLNSEH). A leucine-zipper region spans residues 346 to 367 (VQQLELQLAKDKERLQAMMTHL). Glycyl lysine isopeptide (Lys-Gly) (interchain with G-Cter in SUMO2) cross-links involve residues Lys-370 and Lys-375. Positions 380-384 (PLNLV) are CTBP1-binding. The span at 388 to 401 (TLSKSASEASPQSL) shows a compositional bias: polar residues. Positions 388-427 (TLSKSASEASPQSLPHTPTTPTAPITPATQGPSVITTTSM) are disordered. The segment covering 402-419 (PHTPTTPTAPITPATQGP) has biased composition (low complexity). A Glycyl lysine isopeptide (Lys-Gly) (interchain with G-Cter in SUMO2) cross-link involves residue Lys-440. A DNA-binding region (fork-head) is located at residues 462 to 552 (RPPFTYASLI…PQKISGNPSL (91 aa)). Positions 608-674 (EHTNSNESDS…EDEPVNEDME (67 aa)) are disordered. Over residues 609–620 (HTNSNESDSSPG) the composition is skewed to polar residues. Thr-650 bears the Phosphothreonine mark. A Phosphoserine modification is found at Ser-655. The segment covering 664–674 (YEDEPVNEDME) has biased composition (acidic residues).

Forms homodimers and heterodimers with FOXP2 and FOXP4. Dimerization is required for DNA-binding. Self-associates. Interacts with CTBP1. Interacts with NCOR2 and AR. Interacts with FOXP2. Interacts with TBR1. Interacts with AURKA; this interaction facilitates the phosphorylation of FOXP1, which suppresses the expression of FBXL7. Interacts with ZMYM2.

The protein localises to the nucleus. In terms of biological role, transcriptional repressor. Can act with CTBP1 to synergistically repress transcription but CTPBP1 is not essential. Plays an important role in the specification and differentiation of lung epithelium. Acts cooperatively with FOXP4 to regulate lung secretory epithelial cell fate and regeneration by restricting the goblet cell lineage program; the function may involve regulation of AGR2. Essential transcriptional regulator of B-cell development. Involved in regulation of cardiac muscle cell proliferation. Involved in the columnar organization of spinal motor neurons. Promotes the formation of the lateral motor neuron column (LMC) and the preganglionic motor column (PGC) and is required for respective appropriate motor axon projections. The segment-appropriate generation of spinal cord motor columns requires cooperation with other Hox proteins. Can regulate PITX3 promoter activity; may promote midbrain identity in embryonic stem cell-derived dopamine neurons by regulating PITX3. Negatively regulates the differentiation of T follicular helper cells T(FH)s. Involved in maintenance of hair follicle stem cell quiescence; the function probably involves regulation of FGF18. Represses transcription of various pro-apoptotic genes and cooperates with NF-kappa B-signaling in promoting B-cell expansion by inhibition of caspase-dependent apoptosis. Binds to CSF1R promoter elements and is involved in regulation of monocyte differentiation and macrophage functions; repression of CSF1R in monocytes seems to involve NCOR2 as corepressor. Involved in endothelial cell proliferation, tube formation and migration indicative for a role in angiogenesis; the role in neovascularization seems to implicate suppression of SEMA5B. Can negatively regulate androgen receptor signaling. Acts as a transcriptional activator of the FBXL7 promoter; this activity is regulated by AURKA. This chain is Forkhead box protein P1 (FOXP1), found in Bos taurus (Bovine).